We begin with the raw amino-acid sequence, 464 residues long: Kynurenine 3-monooxygenase (464 aa).

It belongs to the aromatic-ring hydroxylase family. KMO subfamily. It depends on FAD as a cofactor.

The enzyme catalyses L-kynurenine + NADPH + O2 + H(+) = 3-hydroxy-L-kynurenine + NADP(+) + H2O. Its pathway is cofactor biosynthesis; NAD(+) biosynthesis; quinolinate from L-kynurenine: step 1/3. Catalyzes the hydroxylation of L-kynurenine (L-Kyn) to form 3-hydroxy-L-kynurenine (L-3OHKyn). Required for synthesis of quinolinic acid. In Myxococcus xanthus (strain DK1622), this protein is Kynurenine 3-monooxygenase.